We begin with the raw amino-acid sequence, 356 residues long: MSTVTITDLARENVRNLTPYQSARRLGGNGDVWLNANEYPTAVEFQLTQQTLNRYPECQPKAVIDNYAQYAGVKPEQVLVSRGADEGIELLIRAFCEPGKDAILYCPPTYGMYSVSAETIGVECRTVPTLENWQLDLQGISDKLDGVKVVYVCSPNNPTGQLINPQDFRTLLELTRGKAIVVADEAYIEFCPQASLAGWLAEYPHLAILRTLSKAFALAGLRCGFTLANEDVINLLMKVIAPYPLSTPVADIAAQALSPQGILAMRERVVQIIAEREYLIGALKEIPCVEQVFDSETNYILARFKASSAVFKSLWDQGIILRDQNKQPSLSGCLRITVGTREESQRVIDALRAEQV.

K214 is modified (N6-(pyridoxal phosphate)lysine).

It belongs to the class-II pyridoxal-phosphate-dependent aminotransferase family. Histidinol-phosphate aminotransferase subfamily. In terms of assembly, homodimer. Pyridoxal 5'-phosphate serves as cofactor.

The catalysed reaction is L-histidinol phosphate + 2-oxoglutarate = 3-(imidazol-4-yl)-2-oxopropyl phosphate + L-glutamate. The protein operates within amino-acid biosynthesis; L-histidine biosynthesis; L-histidine from 5-phospho-alpha-D-ribose 1-diphosphate: step 7/9. This Escherichia fergusonii (strain ATCC 35469 / DSM 13698 / CCUG 18766 / IAM 14443 / JCM 21226 / LMG 7866 / NBRC 102419 / NCTC 12128 / CDC 0568-73) protein is Histidinol-phosphate aminotransferase.